Here is a 95-residue protein sequence, read N- to C-terminus: Large ribosomal subunit protein bL25 (95 aa).

This sequence belongs to the bacterial ribosomal protein bL25 family. Part of the 50S ribosomal subunit; part of the 5S rRNA/L5/L18/L25 subcomplex. Contacts the 5S rRNA. Binds to the 5S rRNA independently of L5 and L18.

Functionally, this is one of the proteins that binds to the 5S RNA in the ribosome where it forms part of the central protuberance. The protein is Large ribosomal subunit protein bL25 of Mannheimia succiniciproducens (strain KCTC 0769BP / MBEL55E).